The primary structure comprises 32 residues: Yop proteins translocation protein A (32 aa).

The protein is Yop proteins translocation protein A (yscA) of Yersinia pestis.